Reading from the N-terminus, the 247-residue chain is 2,3-bisphosphoglycerate-dependent phosphoglycerate mutase (247 aa).

Substrate is bound by residues R7–N14, T20–G21, R59, E86–Y89, K97, R113–R114, and G182–N183. The Tele-phosphohistidine intermediate role is filled by H8. E86 acts as the Proton donor/acceptor in catalysis.

The protein belongs to the phosphoglycerate mutase family. BPG-dependent PGAM subfamily.

It catalyses the reaction (2R)-2-phosphoglycerate = (2R)-3-phosphoglycerate. Its pathway is carbohydrate degradation; glycolysis; pyruvate from D-glyceraldehyde 3-phosphate: step 3/5. Catalyzes the interconversion of 2-phosphoglycerate and 3-phosphoglycerate. This is 2,3-bisphosphoglycerate-dependent phosphoglycerate mutase from Treponema denticola (strain ATCC 35405 / DSM 14222 / CIP 103919 / JCM 8153 / KCTC 15104).